A 450-amino-acid chain; its full sequence is Sulfite exporter TauE/SafE family protein 1 (450 aa).

Helical transmembrane passes span 5–25, 48–68, 70–90, 97–117, 130–150, 153–173, 223–243, 261–281, 316–336, 340–360, 378–398, and 408–428; these read LVPL…SALA, TIEV…AASI, SAGG…IAGL, SFSA…NLFL, FDLA…GVIC, MFPN…STMK, FPWM…SINL, ALYW…TLCI, VMAL…GMLI, LLQI…MVLF, GTAA…LMVV, and ASII…LMTT.

It belongs to the 4-toluene sulfonate uptake permease (TSUP) (TC 2.A.102) family.

It is found in the membrane. The sequence is that of Sulfite exporter TauE/SafE family protein 1 from Arabidopsis thaliana (Mouse-ear cress).